Reading from the N-terminus, the 157-residue chain is Protein Smg homolog (157 aa).

The protein belongs to the Smg family.

In Xylella fastidiosa (strain M23), this protein is Protein Smg homolog.